The chain runs to 723 residues: tRNA (guanine(27)-N(2))-dimethyltransferase (723 aa).

Residues 1-10 show a composition bias toward acidic residues; sequence MENMAEEELL. The interval 1–72 is disordered; that stretch reads MENMAEEELL…SLASVPEEAE (72 aa). Threonine 23 is modified (phosphothreonine). Residues 32 to 44 are compositionally biased toward low complexity; sequence PAADTALDSAPTP. The span at 45–59 shows a compositional bias: pro residues; that stretch reads DSAPAPALAPAPAPA. Serine 61 is subject to Phosphoserine. Positions 128–132 match the Nucleolar localization signal motif; that stretch reads HKLRR. The C2H2-type zinc finger occupies 177–199; sequence YHCIICSATITRRTDMLGHVKRH. In terms of domain architecture, Trm1 methyltransferase spans 220 to 679; sequence EVLKETDTDI…ASLTQFKSIL (460 aa). S-adenosyl-L-methionine-binding residues include arginine 253, aspartate 300, aspartate 348, and alanine 349. The Zn(2+) site is built by cysteine 479, cysteine 482, cysteine 504, and cysteine 506. A Glycyl lysine isopeptide (Lys-Gly) (interchain with G-Cter in SUMO2) cross-link involves residue lysine 576. The residue at position 603 (serine 603) is a Phosphoserine.

The protein belongs to the class I-like SAM-binding methyltransferase superfamily. Trm1 family.

The protein localises to the nucleus. It localises to the nucleolus. The enzyme catalyses guanosine(27) in tRNA(Tyr) + 2 S-adenosyl-L-methionine = N(2)-dimethylguanosine(27) in tRNA(Tyr) + 2 S-adenosyl-L-homocysteine + 2 H(+). Its function is as follows. Specifically dimethylates a single guanine residue at position 27 of tRNA(Tyr) using S-adenosyl-L-methionine as donor of the methyl groups. Dimethylation at position 27 of tRNA(Tyr) is required for efficient translation of tyrosine codons. Also required to maintain 3-(3-amino-3-carboxypropyl)uridine (acp3U) in the D-loop of several cytoplasmic tRNAs. In Rattus norvegicus (Rat), this protein is tRNA (guanine(27)-N(2))-dimethyltransferase.